A 347-amino-acid polypeptide reads, in one-letter code: Dihydroorotase (347 aa).

Zn(2+)-binding residues include H17 and H19. Substrate-binding positions include 19–21 and N45; that span reads HLR. The Zn(2+) site is built by K103, H140, and H178. K103 bears the N6-carboxylysine mark. H140 contributes to the substrate binding site. A substrate-binding site is contributed by L223. D251 contacts Zn(2+). D251 is an active-site residue. Positions 255 and 267 each coordinate substrate.

This sequence belongs to the metallo-dependent hydrolases superfamily. DHOase family. Class II DHOase subfamily. As to quaternary structure, homodimer. Requires Zn(2+) as cofactor.

The enzyme catalyses (S)-dihydroorotate + H2O = N-carbamoyl-L-aspartate + H(+). Its pathway is pyrimidine metabolism; UMP biosynthesis via de novo pathway; (S)-dihydroorotate from bicarbonate: step 3/3. In terms of biological role, catalyzes the reversible cyclization of carbamoyl aspartate to dihydroorotate. The chain is Dihydroorotase from Citrobacter koseri (strain ATCC BAA-895 / CDC 4225-83 / SGSC4696).